We begin with the raw amino-acid sequence, 542 residues long: Trans-alpha-bergamotene synthase (542 aa).

Mg(2+) is bound by residues Asp-295, Asp-299, Asp-439, Thr-443, and Glu-447. The DDXXD motif signature appears at 295–299 (DDFYD).

Belongs to the terpene synthase family. The cofactor is Mg(2+).

It catalyses the reaction (2E,6E)-farnesyl diphosphate = (1S,5S,6R)-alpha-bergamotene + diphosphate. It participates in secondary metabolite biosynthesis; terpenoid biosynthesis. In terms of biological role, sesquiterpene synthase converting farnesyl diphosphate to trans-alpha-bergamotene as the major product. This chain is Trans-alpha-bergamotene synthase, found in Phyla dulcis (Aztec sweet herb).